The following is a 77-amino-acid chain: Acyl carrier protein (77 aa).

The 76-residue stretch at 2 to 77 folds into the Carrier domain; sequence STIEERVKKV…EAIDYVVAHQ (76 aa). S37 is subject to O-(pantetheine 4'-phosphoryl)serine.

Belongs to the acyl carrier protein (ACP) family. In terms of processing, 4'-phosphopantetheine is transferred from CoA to a specific serine of apo-ACP by AcpS. This modification is essential for activity because fatty acids are bound in thioester linkage to the sulfhydryl of the prosthetic group.

It localises to the cytoplasm. The protein operates within lipid metabolism; fatty acid biosynthesis. Its function is as follows. Carrier of the growing fatty acid chain in fatty acid biosynthesis. The polypeptide is Acyl carrier protein (Chromohalobacter salexigens (strain ATCC BAA-138 / DSM 3043 / CIP 106854 / NCIMB 13768 / 1H11)).